The chain runs to 837 residues: Protein translocase subunit SecA 1 (837 aa).

ATP contacts are provided by residues Gln-85, 103-107 (GEGKT), and Asp-493. Residues Cys-821, Cys-823, Cys-832, and His-833 each contribute to the Zn(2+) site.

It belongs to the SecA family. In terms of assembly, monomer and homodimer. Part of the essential Sec protein translocation apparatus which comprises SecA, SecYEG and auxiliary proteins SecDF. Other proteins may also be involved. It depends on Zn(2+) as a cofactor.

The protein localises to the cell membrane. The protein resides in the cytoplasm. It catalyses the reaction ATP + H2O + cellular proteinSide 1 = ADP + phosphate + cellular proteinSide 2.. In terms of biological role, part of the Sec protein translocase complex. Interacts with the SecYEG preprotein conducting channel. Has a central role in coupling the hydrolysis of ATP to the transfer of proteins into and across the cell membrane, serving as an ATP-driven molecular motor driving the stepwise translocation of polypeptide chains across the membrane. In Streptococcus pneumoniae serotype 4 (strain ATCC BAA-334 / TIGR4), this protein is Protein translocase subunit SecA 1.